The following is a 620-amino-acid chain: Chaperone protein HscA homolog (620 aa).

The protein belongs to the heat shock protein 70 family.

Functionally, chaperone involved in the maturation of iron-sulfur cluster-containing proteins. Has a low intrinsic ATPase activity which is markedly stimulated by HscB. This Shewanella putrefaciens (strain CN-32 / ATCC BAA-453) protein is Chaperone protein HscA homolog.